Reading from the N-terminus, the 772-residue chain is Polyribonucleotide nucleotidyltransferase (772 aa).

Positions 486 and 492 each coordinate Mg(2+). The region spanning 553–612 (PRIETLQIDKSKIRDVIGTGGKVIREIVATTGAKVDIDDEGLIKISSSDLTQIEAAKNWI) is the KH domain. The 69-residue stretch at 622–690 (GKIYKGKVVN…QRGKVRLSMR (69 aa)) folds into the S1 motif domain. A disordered region spans residues 695-772 (ETGAELEDTR…HMPAFLKSDD (78 aa)). Positions 701 to 760 (EDTRPPREPREPRGDRGDRGDRGDRRGPRGDRGPRREGGDRGPRREGGDRPRRDRDDGPA) are enriched in basic and acidic residues.

It belongs to the polyribonucleotide nucleotidyltransferase family. Mg(2+) is required as a cofactor.

The protein localises to the cytoplasm. The enzyme catalyses RNA(n+1) + phosphate = RNA(n) + a ribonucleoside 5'-diphosphate. Involved in mRNA degradation. Catalyzes the phosphorolysis of single-stranded polyribonucleotides processively in the 3'- to 5'-direction. This is Polyribonucleotide nucleotidyltransferase from Novosphingobium aromaticivorans (strain ATCC 700278 / DSM 12444 / CCUG 56034 / CIP 105152 / NBRC 16084 / F199).